Reading from the N-terminus, the 1137-residue chain is Isoleucine--tRNA ligase (1137 aa).

The 'HIGH' region motif lies at 50–60; that stretch reads PSANGMPGIHH. The 'KMSKS' region signature appears at 688–692; sequence KMSKR. An ATP-binding site is contributed by lysine 691.

This sequence belongs to the class-I aminoacyl-tRNA synthetase family. IleS type 2 subfamily. In terms of assembly, monomer. Zn(2+) serves as cofactor.

It is found in the cytoplasm. The catalysed reaction is tRNA(Ile) + L-isoleucine + ATP = L-isoleucyl-tRNA(Ile) + AMP + diphosphate. Catalyzes the attachment of isoleucine to tRNA(Ile). As IleRS can inadvertently accommodate and process structurally similar amino acids such as valine, to avoid such errors it has two additional distinct tRNA(Ile)-dependent editing activities. One activity is designated as 'pretransfer' editing and involves the hydrolysis of activated Val-AMP. The other activity is designated 'posttransfer' editing and involves deacylation of mischarged Val-tRNA(Ile). The sequence is that of Isoleucine--tRNA ligase from Porphyromonas gingivalis (strain ATCC BAA-308 / W83).